Here is a 217-residue protein sequence, read N- to C-terminus: Pyridoxine/pyridoxamine 5'-phosphate oxidase (217 aa).

Substrate-binding positions include arginine 13–tyrosine 16 and lysine 71. FMN contacts are provided by residues arginine 66–lysine 71, tyrosine 81–threonine 82, arginine 87, lysine 88, and glutamine 110. The substrate site is built by tyrosine 128, arginine 132, and serine 136. Residues glutamine 145–serine 146 and tryptophan 190 each bind FMN. Arginine 196–histidine 198 serves as a coordination point for substrate. Arginine 200 contacts FMN.

Belongs to the pyridoxamine 5'-phosphate oxidase family. In terms of assembly, homodimer. FMN is required as a cofactor.

It carries out the reaction pyridoxamine 5'-phosphate + O2 + H2O = pyridoxal 5'-phosphate + H2O2 + NH4(+). The catalysed reaction is pyridoxine 5'-phosphate + O2 = pyridoxal 5'-phosphate + H2O2. Its pathway is cofactor metabolism; pyridoxal 5'-phosphate salvage; pyridoxal 5'-phosphate from pyridoxamine 5'-phosphate: step 1/1. The protein operates within cofactor metabolism; pyridoxal 5'-phosphate salvage; pyridoxal 5'-phosphate from pyridoxine 5'-phosphate: step 1/1. Its function is as follows. Catalyzes the oxidation of either pyridoxine 5'-phosphate (PNP) or pyridoxamine 5'-phosphate (PMP) into pyridoxal 5'-phosphate (PLP). This is Pyridoxine/pyridoxamine 5'-phosphate oxidase from Yersinia pestis bv. Antiqua (strain Antiqua).